The chain runs to 151 residues: uncharacterized protein (151 aa).

This is an uncharacterized protein from Saccharomyces cerevisiae (strain ATCC 204508 / S288c) (Baker's yeast).